The chain runs to 77 residues: MDSIEKTPDGEEEEKDVWDTALEKGGCVEEHLRLNDCYWDTHDWRKCTEQMEEFRKCWEKRHGPLPSISDKKNKNLS.

Positions 24-65 (KGGCVEEHLRLNDCYWDTHDWRKCTEQMEEFRKCWEKRHGPL) constitute a CHCH domain. 2 consecutive short sequence motifs (cx9C motif) follow at residues 27 to 37 (CVEEHLRLNDC) and 47 to 57 (CTEQMEEFRKC). 2 disulfide bridges follow: Cys-27-Cys-57 and Cys-37-Cys-47.

Its subcellular location is the cytoplasm. It is found in the nucleus. This Schizosaccharomyces pombe (strain 972 / ATCC 24843) (Fission yeast) protein is Coiled-coil-helix-coiled-coil-helix domain-containing protein C550.01c.